Here is a 406-residue protein sequence, read N- to C-terminus: Imidazolonepropionase (406 aa).

Fe(3+) contacts are provided by His-65 and His-67. Zn(2+) is bound by residues His-65 and His-67. Positions 74, 137, and 170 each coordinate 4-imidazolone-5-propanoate. Position 137 (Tyr-137) interacts with N-formimidoyl-L-glutamate. His-235 serves as a coordination point for Fe(3+). His-235 is a binding site for Zn(2+). Gln-238 is a binding site for 4-imidazolone-5-propanoate. Asp-310 serves as a coordination point for Fe(3+). Asp-310 is a binding site for Zn(2+). 2 residues coordinate N-formimidoyl-L-glutamate: Asn-312 and Gly-314. Thr-315 contributes to the 4-imidazolone-5-propanoate binding site.

It belongs to the metallo-dependent hydrolases superfamily. HutI family. Zn(2+) serves as cofactor. It depends on Fe(3+) as a cofactor.

It is found in the cytoplasm. The catalysed reaction is 4-imidazolone-5-propanoate + H2O = N-formimidoyl-L-glutamate. It functions in the pathway amino-acid degradation; L-histidine degradation into L-glutamate; N-formimidoyl-L-glutamate from L-histidine: step 3/3. Catalyzes the hydrolytic cleavage of the carbon-nitrogen bond in imidazolone-5-propanoate to yield N-formimidoyl-L-glutamate. It is the third step in the universal histidine degradation pathway. The chain is Imidazolonepropionase from Vibrio vulnificus (strain CMCP6).